The chain runs to 657 residues: Methylenetetrahydrofolate reductase 1 (657 aa).

The active-site Proton donor/acceptor is the glutamate 18. NAD(+) is bound by residues 18–23 (EFFPPK) and 49–50 (TW). Residues 49-50 (TW), histidine 78, and 108-110 (RGD) each bind FAD. Residue aspartate 110 coordinates substrate. Serine 120 bears the Phosphoserine mark. Residues 129-130 (YA), tyrosine 152, aspartate 171, and lysine 178 contribute to the FAD site. Substrate contacts are provided by glutamine 189 and tyrosine 286. A Phosphoserine modification is found at serine 301. The disordered stretch occupies residues 308–329 (VNESSEEEGEDETSGEIGSIEN). Acidic residues predominate over residues 311–321 (SSEEEGEDETS). Serine 358 carries the post-translational modification Phosphoserine.

It belongs to the methylenetetrahydrofolate reductase family. It depends on FAD as a cofactor.

It carries out the reaction (6S)-5-methyl-5,6,7,8-tetrahydrofolate + NADP(+) = (6R)-5,10-methylene-5,6,7,8-tetrahydrofolate + NADPH + H(+). The enzyme catalyses (6S)-5-methyl-5,6,7,8-tetrahydrofolate + NAD(+) = (6R)-5,10-methylene-5,6,7,8-tetrahydrofolate + NADH + H(+). The protein operates within one-carbon metabolism; tetrahydrofolate interconversion. In Saccharomyces cerevisiae (strain ATCC 204508 / S288c) (Baker's yeast), this protein is Methylenetetrahydrofolate reductase 1 (MET12).